The primary structure comprises 287 residues: F420-non-reducing hydrogenase vhu subunit G (287 aa).

It belongs to the [NiFe]/[NiFeSe] hydrogenase small subunit family. The F420-non-reducing hydrogenase vhu is composed of four subunits; VhuA, VhuD, VhuG and VhuU.

This is F420-non-reducing hydrogenase vhu subunit G (vhuG) from Methanococcus voltae.